A 361-amino-acid polypeptide reads, in one-letter code: Holliday junction branch migration complex subunit RuvB (361 aa).

A compositionally biased stretch (acidic residues) spans 1–12 (MNWDETGPETDE). The tract at residues 1-21 (MNWDETGPETDEPTGPVLDDR) is disordered. Residues 13 to 199 (PTGPVLDDRL…FGFTGHMEFY (187 aa)) are large ATPase domain (RuvB-L). Residues leucine 38, arginine 39, glycine 80, lysine 83, threonine 84, threonine 85, 146-148 (EDF), arginine 189, tyrosine 199, and arginine 236 each bind ATP. Threonine 84 contacts Mg(2+). The tract at residues 200-270 (APAELERVLH…IAMAALKVYE (71 aa)) is small ATPAse domain (RuvB-S). The interval 273–361 (ARGLDRLDRA…AKGQQGLFGA (89 aa)) is head domain (RuvB-H). Residues arginine 309, arginine 328, and arginine 333 each contribute to the DNA site.

The protein belongs to the RuvB family. Homohexamer. Forms an RuvA(8)-RuvB(12)-Holliday junction (HJ) complex. HJ DNA is sandwiched between 2 RuvA tetramers; dsDNA enters through RuvA and exits via RuvB. An RuvB hexamer assembles on each DNA strand where it exits the tetramer. Each RuvB hexamer is contacted by two RuvA subunits (via domain III) on 2 adjacent RuvB subunits; this complex drives branch migration. In the full resolvosome a probable DNA-RuvA(4)-RuvB(12)-RuvC(2) complex forms which resolves the HJ.

It localises to the cytoplasm. It catalyses the reaction ATP + H2O = ADP + phosphate + H(+). Functionally, the RuvA-RuvB-RuvC complex processes Holliday junction (HJ) DNA during genetic recombination and DNA repair, while the RuvA-RuvB complex plays an important role in the rescue of blocked DNA replication forks via replication fork reversal (RFR). RuvA specifically binds to HJ cruciform DNA, conferring on it an open structure. The RuvB hexamer acts as an ATP-dependent pump, pulling dsDNA into and through the RuvAB complex. RuvB forms 2 homohexamers on either side of HJ DNA bound by 1 or 2 RuvA tetramers; 4 subunits per hexamer contact DNA at a time. Coordinated motions by a converter formed by DNA-disengaged RuvB subunits stimulates ATP hydrolysis and nucleotide exchange. Immobilization of the converter enables RuvB to convert the ATP-contained energy into a lever motion, pulling 2 nucleotides of DNA out of the RuvA tetramer per ATP hydrolyzed, thus driving DNA branch migration. The RuvB motors rotate together with the DNA substrate, which together with the progressing nucleotide cycle form the mechanistic basis for DNA recombination by continuous HJ branch migration. Branch migration allows RuvC to scan DNA until it finds its consensus sequence, where it cleaves and resolves cruciform DNA. The sequence is that of Holliday junction branch migration complex subunit RuvB from Streptomyces griseus subsp. griseus (strain JCM 4626 / CBS 651.72 / NBRC 13350 / KCC S-0626 / ISP 5235).